Here is a 240-residue protein sequence, read N- to C-terminus: Pyridoxine 5'-phosphate synthase (240 aa).

A 3-amino-2-oxopropyl phosphate-binding site is contributed by N6. 8–9 contacts 1-deoxy-D-xylulose 5-phosphate; sequence DH. R17 contributes to the 3-amino-2-oxopropyl phosphate binding site. H42 functions as the Proton acceptor in the catalytic mechanism. Residues R44 and H49 each coordinate 1-deoxy-D-xylulose 5-phosphate. The active-site Proton acceptor is E69. T99 provides a ligand contact to 1-deoxy-D-xylulose 5-phosphate. H190 functions as the Proton donor in the catalytic mechanism. 3-amino-2-oxopropyl phosphate-binding positions include G191 and 212–213; that span reads GH.

It belongs to the PNP synthase family. In terms of assembly, homooctamer; tetramer of dimers.

It is found in the cytoplasm. The enzyme catalyses 3-amino-2-oxopropyl phosphate + 1-deoxy-D-xylulose 5-phosphate = pyridoxine 5'-phosphate + phosphate + 2 H2O + H(+). It participates in cofactor biosynthesis; pyridoxine 5'-phosphate biosynthesis; pyridoxine 5'-phosphate from D-erythrose 4-phosphate: step 5/5. Its function is as follows. Catalyzes the complicated ring closure reaction between the two acyclic compounds 1-deoxy-D-xylulose-5-phosphate (DXP) and 3-amino-2-oxopropyl phosphate (1-amino-acetone-3-phosphate or AAP) to form pyridoxine 5'-phosphate (PNP) and inorganic phosphate. The sequence is that of Pyridoxine 5'-phosphate synthase from Pseudomonas putida (strain ATCC 700007 / DSM 6899 / JCM 31910 / BCRC 17059 / LMG 24140 / F1).